We begin with the raw amino-acid sequence, 355 residues long: Protein ECERIFERUM 16 (355 aa).

2 disordered regions span residues 1 to 60 and 296 to 315; these read MDSK…LPSN and HSST…KIHM. Over residues 7-28 the composition is skewed to basic residues; that stretch reads AKSKRAHTLHHSKKSHSVHKPK. Composition is skewed to polar residues over residues 41 to 53 and 296 to 310; these read QGNQ…QSRR and HSST…NPSD.

Interacts with RST1. Expressed in taproots, lateral roots, root tips, leaf veins, cauline leaves, inflorescences, flowers, and siliques.

Its subcellular location is the cytoplasm. It is found in the cytosol. The protein localises to the endoplasmic reticulum. Together with RST1, acts as a cofactor of the cytoplasmic exosome and connects the cytosolic RNA exosome to the SKI complex. Acts as a post-transcriptional gene silencing (PTGS) suppressor. CER16/RIPR can, like RST1 suppress the production of small interfering RNAs (siRNAs) from the CER3 locus, which is involved in cuticule membrane and wax production, and in the typhine and sporopollenin biosynthesis of pollen. This is Protein ECERIFERUM 16 from Arabidopsis thaliana (Mouse-ear cress).